The sequence spans 205 residues: Ribonuclease HII (205 aa).

Residues 14–201 (EIIAGVDEAG…KGNINHSAIL (188 aa)) form the RNase H type-2 domain. Asp20, Glu21, and Asp111 together coordinate a divalent metal cation.

The protein belongs to the RNase HII family. Requires Mn(2+) as cofactor. The cofactor is Mg(2+).

It is found in the cytoplasm. The enzyme catalyses Endonucleolytic cleavage to 5'-phosphomonoester.. Functionally, endonuclease that specifically degrades the RNA of RNA-DNA hybrids. The chain is Ribonuclease HII from Orientia tsutsugamushi (strain Ikeda) (Rickettsia tsutsugamushi).